A 241-amino-acid polypeptide reads, in one-letter code: Ribonuclease 3 (241 aa).

Residues 8 to 137 form the RNase III domain; it reads LTLLKNRLGI…LLGAVYLDQG (130 aa). Position 50 (E50) interacts with Mg(2+). D54 is an active-site residue. Residues D123 and E126 each contribute to the Mg(2+) site. E126 is an active-site residue. In terms of domain architecture, DRBM spans 164–233; that stretch reads DYKTELQELV…AKKALMKSDL (70 aa). Residues 214-241 are disordered; the sequence is RSKKEAEQQAAKKALMKSDLGSACNHKK.

Belongs to the ribonuclease III family. Homodimer. Mg(2+) serves as cofactor.

The protein localises to the cytoplasm. It catalyses the reaction Endonucleolytic cleavage to 5'-phosphomonoester.. Its function is as follows. Digests double-stranded RNA. Involved in the processing of primary rRNA transcript to yield the immediate precursors to the large and small rRNAs (23S and 16S). Processes some mRNAs, and tRNAs when they are encoded in the rRNA operon. Processes pre-crRNA and tracrRNA of type II CRISPR loci if present in the organism. The chain is Ribonuclease 3 from Pelotomaculum thermopropionicum (strain DSM 13744 / JCM 10971 / SI).